The sequence spans 235 residues: Proteasome subunit alpha type-2 (235 aa).

Belongs to the peptidase T1A family. In terms of assembly, the 26S proteasome consists of a 20S proteasome core and two 19S regulatory subunits. The 20S proteasome core is composed of 28 subunits that are arranged in four stacked rings, resulting in a barrel-shaped structure. The two end rings are each formed by seven alpha subunits, and the two central rings are each formed by seven beta subunits. The catalytic chamber with the active sites is on the inside of the barrel.

It localises to the cytoplasm. Its subcellular location is the nucleus. The proteasome is a multicatalytic proteinase complex which is characterized by its ability to cleave peptides with Arg, Phe, Tyr, Leu, and Glu adjacent to the leaving group at neutral or slightly basic pH. The proteasome has an ATP-dependent proteolytic activity. In Oryza sativa subsp. indica (Rice), this protein is Proteasome subunit alpha type-2 (PAB1).